A 580-amino-acid chain; its full sequence is MERKQKNSLFNYIYSLMDVRGKFLFFSMLFITSLSSIIISISPLILAKITDLLSGSLSNFSYEYLVLLACLYMFCVISNKASVFLFMILQSSLRINMQKKMSLKYLRELYNENITNLSKNNAGYTTQSLNQASNDIYILVRNVSQNILSPVIQLISTIVVVLSTKDWFSAGVFFLYILVFVIFNTRLTGSLASLRKHSMDITLNSYSLLSDTVDNMIAAKKNNALRLISERYEDALTQENNAQKKYWLLSSKVLLLNSLLAVILFGSVFIYNILGVLNGVVSIGHFIMITSYIILLSTPVENIGALLSEIRQSMSSLAGFIQRHAENKATSPSIPFLNMERKLNLSIRELSFSYSDDKKILNSVSLDLFTGKMYSLTGPSGSGKSTLVKIISGYYKNYFGDIYLNDISLRNISDEDLNDAIYYLTQDDYIFMDTLRFNLRLANYDASENEIFKVLKLANLSVVNNEPVSLDTHLINRGNNYSGGQKQRISLARLFLRKPAIIIIDEATSALDYINESEILSSIRTHFPDALIINISHRINLLECSDCVYVLNEGNIVASGHFRDLMVSNEYISGLASVTE.

6 helical membrane-spanning segments follow: residues 25–45, 66–86, 143–163, 167–187, 261–281, and 286–306; these read FFSM…SPLI, VLLA…VFLF, VSQN…VVLS, WFSA…NTRL, AVIL…NGVV, and FIMI…IGAL. An ABC transmembrane type-1 domain is found at 25-312; sequence FFSMLFITSL…IGALLSEIRQ (288 aa). An ABC transporter domain is found at 345 to 578; it reads LSIRELSFSY…NEYISGLASV (234 aa). Residue 378–385 participates in ATP binding; it reads GPSGSGKS.

Belongs to the ABC transporter superfamily. Homodimer.

It localises to the cell inner membrane. Is able to protect a cell, which harbors the plasmid pTUC100 encoding microcin J25, against microcin J25. Is required for microcin J25 export out of the producing cells. The protein is Microcin-J25 export ATP-binding/permease protein McjD (mcjD) of Escherichia coli.